Consider the following 3259-residue polypeptide: Striated muscle-specific serine/threonine-protein kinase (3259 aa).

The segment at methionine 1–glycine 30 is disordered. The residue at position 33 (arginine 33) is an Omega-N-methylarginine. The Ig-like 1 domain maps to proline 45–threonine 126. A Phosphoserine modification is found at serine 141. Disordered stretches follow at residues arginine 155–glutamate 185, glutamate 198–histidine 226, proline 278–tyrosine 716, and valine 816–leucine 880. A compositionally biased stretch (polar residues) spans serine 158 to glutamate 185. A compositionally biased stretch (pro residues) spans proline 301–proline 317. Residues serine 368 and serine 375 each carry the phosphoserine modification. Threonine 379 bears the Phosphothreonine mark. 2 positions are modified to phosphoserine: serine 382 and serine 385. Residues isoleucine 404–aspartate 422 show a composition bias toward basic and acidic residues. Serine 423 is subject to Phosphoserine. Threonine 453 carries the phosphothreonine modification. Phosphoserine occurs at positions 457, 463, 493, 511, 531, and 554. Over residues glutamate 459–arginine 473 the composition is skewed to basic and acidic residues. The segment covering threonine 510–leucine 522 has biased composition (basic and acidic residues). Basic and acidic residues-rich tracts occupy residues proline 624 to proline 638 and glutamate 663 to glutamate 680. The Ig-like 2 domain occupies proline 727 to arginine 817. Over residues alanine 820–threonine 830 the composition is skewed to polar residues. Ig-like domains follow at residues proline 874–glutamate 963, proline 968–threonine 1056, and proline 1069–tyrosine 1157. Cysteine 994 and cysteine 1046 are oxidised to a cystine. A phosphoserine mark is found at serine 1133 and serine 1177. A disordered region spans residues arginine 1162–glycine 1185. The Ig-like 6 domain maps to proline 1193–threonine 1283. One can recognise a Fibronectin type-III 1 domain in the interval proline 1290–histidine 1387. A compositionally biased stretch (low complexity) spans serine 1367–serine 1379. The tract at residues serine 1367 to glutamate 1386 is disordered. The Ig-like 7 domain maps to proline 1490–serine 1578. Residues tyrosine 1606–phenylalanine 1859 form the Protein kinase 1 domain. ATP contacts are provided by residues isoleucine 1612–leucine 1620 and lysine 1635. Residue aspartate 1724 is the Proton acceptor of the active site. Disordered stretches follow at residues methionine 1913–alanine 2244, alanine 2336–leucine 2451, and arginine 2463–asparagine 2562. Positions proline 1918 to serine 1927 are enriched in low complexity. Residues serine 1993, serine 2004, serine 2019, serine 2020, and serine 2042 each carry the phosphoserine modification. The span at serine 2009–serine 2019 shows a compositional bias: basic and acidic residues. Asymmetric dimethylarginine; alternate is present on arginine 2060. The residue at position 2060 (arginine 2060) is an Omega-N-methylarginine; alternate. Residues alanine 2069–arginine 2081 are compositionally biased toward low complexity. Residues serine 2114 and serine 2135 each carry the phosphoserine modification. Arginine 2144 is modified (omega-N-methylarginine). Residues glutamate 2168–glutamine 2179 show a composition bias toward polar residues. Positions proline 2180 to proline 2189 are enriched in pro residues. Phosphoserine occurs at positions 2182 and 2207. The segment covering isoleucine 2193–serine 2207 has biased composition (polar residues). Pro residues predominate over residues proline 2208–glutamate 2218. Positions lysine 2219 to arginine 2229 are enriched in basic and acidic residues. Residues alanine 2230–alanine 2244 show a composition bias toward low complexity. The span at alanine 2336 to proline 2345 shows a compositional bias: basic and acidic residues. Positions leucine 2346 to arginine 2355 are enriched in low complexity. The span at serine 2356–isoleucine 2372 shows a compositional bias: basic and acidic residues. Serine 2376 is subject to Phosphoserine. Threonine 2380 carries the post-translational modification Phosphothreonine. Basic and acidic residues predominate over residues leucine 2384–glutamine 2395. Phosphoserine occurs at positions 2410, 2414, 2438, 2439, 2444, and 2448. Positions arginine 2463 to serine 2484 are enriched in low complexity. Polar residues predominate over residues glutamine 2510–proline 2520. Phosphoserine is present on residues serine 2521 and serine 2524. Residues serine 2521–glutamate 2540 are compositionally biased toward low complexity. Residues serine 2543–lysine 2554 are compositionally biased toward basic residues. Serine 2559 carries the post-translational modification Phosphoserine. An Ig-like 8 domain is found at proline 2583 to alanine 2673. Cysteine 2605 and cysteine 2657 are disulfide-bonded. Residues lysine 2680–serine 2774 enclose the Fibronectin type-III 2 domain. Position 2771 is a phosphothreonine (threonine 2771). Disordered regions lie at residues threonine 2771 to asparagine 2829 and threonine 2855 to proline 2957. At serine 2774 the chain carries Phosphoserine. Over residues arginine 2793 to alanine 2810 the composition is skewed to pro residues. Residues serine 2814–alanine 2828 show a composition bias toward low complexity. Residues glutamate 2859 to alanine 2965 form the Fibronectin type-III 3 domain. Over residues glycine 2880 to valine 2907 the composition is skewed to polar residues. Residues proline 2910–proline 2924 show a composition bias toward pro residues. The span at serine 2940–arginine 2950 shows a compositional bias: polar residues. Serine 2941 is modified (phosphoserine). The region spanning tyrosine 2958–leucine 3210 is the Protein kinase 2 domain. Residues lysine 2964–valine 2972 and lysine 2987 each bind ATP. The active-site Proton acceptor is aspartate 3077.

This sequence belongs to the protein kinase superfamily. CAMK Ser/Thr protein kinase family. Interacts with MTM1. May be autophosphorylated. Isoform 2 is highly expressed in differentiated arterial smooth muscle cells (ASMC) in the medial layer of the aorta. Weakly detected in brain and testis and to a lesser extent in organs rich in striated muscle or visceral smooth muscle.

The protein resides in the nucleus. It carries out the reaction L-seryl-[protein] + ATP = O-phospho-L-seryl-[protein] + ADP + H(+). The catalysed reaction is L-threonyl-[protein] + ATP = O-phospho-L-threonyl-[protein] + ADP + H(+). Its function is as follows. Isoform 2 may have a role in regulating the growth and differentiation of arterial smooth muscle cells. The polypeptide is Striated muscle-specific serine/threonine-protein kinase (Speg) (Rattus norvegicus (Rat)).